The chain runs to 173 residues: ATP synthase subunit delta (173 aa).

The protein belongs to the ATPase delta chain family. As to quaternary structure, F-type ATPases have 2 components, F(1) - the catalytic core - and F(0) - the membrane proton channel. F(1) has five subunits: alpha(3), beta(3), gamma(1), delta(1), epsilon(1). F(0) has three main subunits: a(1), b(2) and c(10-14). The alpha and beta chains form an alternating ring which encloses part of the gamma chain. F(1) is attached to F(0) by a central stalk formed by the gamma and epsilon chains, while a peripheral stalk is formed by the delta and b chains.

It localises to the cell inner membrane. F(1)F(0) ATP synthase produces ATP from ADP in the presence of a proton or sodium gradient. F-type ATPases consist of two structural domains, F(1) containing the extramembraneous catalytic core and F(0) containing the membrane proton channel, linked together by a central stalk and a peripheral stalk. During catalysis, ATP synthesis in the catalytic domain of F(1) is coupled via a rotary mechanism of the central stalk subunits to proton translocation. In terms of biological role, this protein is part of the stalk that links CF(0) to CF(1). It either transmits conformational changes from CF(0) to CF(1) or is implicated in proton conduction. The polypeptide is ATP synthase subunit delta (Campylobacter jejuni subsp. jejuni serotype O:6 (strain 81116 / NCTC 11828)).